A 277-amino-acid chain; its full sequence is Small ribosomal subunit protein uS3 (277 aa).

One can recognise a KH type-2 domain in the interval 43 to 111 (IRQLMSTGME…QVQLNILEVK (69 aa)). A compositionally biased stretch (low complexity) spans 218–228 (QQAAAAPSRGR). The interval 218-277 (QQAAAAPSRGRGASDRPGRPGGADRGDRRRRTDRPAAEAAPAAEAPAVEAAAPAVEGGQA) is disordered. The span at 229 to 244 (GASDRPGRPGGADRGD) shows a compositional bias: basic and acidic residues. A compositionally biased stretch (low complexity) spans 254–277 (AEAAPAAEAPAVEAAAPAVEGGQA).

The protein belongs to the universal ribosomal protein uS3 family. As to quaternary structure, part of the 30S ribosomal subunit. Forms a tight complex with proteins S10 and S14.

Functionally, binds the lower part of the 30S subunit head. Binds mRNA in the 70S ribosome, positioning it for translation. This chain is Small ribosomal subunit protein uS3, found in Arthrobacter sp. (strain FB24).